Consider the following 492-residue polypeptide: MEEWVEKYRPKSLNDVAGHSKTKEALCYWIESFIRGNKQKPVLLFGPPGSGKTTMAHAIANDYNFDVIELNASDKRNKDVISQVVGTAATSKSLTGKRTLIVLDEVDGLSGNDDRGGVSEIIKVLKNAENPVILTANDVYKPALSSLRNSVTMVDAGSVHTNSIPPVLRKIALKEGFEIDEKVIKLISSHAGGDLRAAINDLQALLTGGSIEIEDAKNLPDRDSEKSIFDAIRIIMKTTHYDIATSATVDLKEELGTVSEWISENLPKEYLKYGDLAKGYDYLSKSDVFLGRVYRRQYFGLWRYASALMTAGTALSKEDKYRGFTRYSPPTVFTKLSRTKVAREKLKEILKKIGIKTHTSIKGARSTLDFLYVIFESNLQMATDLTLYYEFTKEEVEFLTNKKISKDIFSIIECEKTKKTDDKNLMKKDLEEDTFKEKTNEIMPVIPKRPKISDNQISEILTKDNNPKDDVKKASKKPESTSKKQATLDKFF.

46 to 53 contacts ATP; it reads GPPGSGKT. A disordered region spans residues 445 to 492; it reads VIPKRPKISDNQISEILTKDNNPKDDVKKASKKPESTSKKQATLDKFF. The segment covering 461 to 482 has biased composition (basic and acidic residues); that stretch reads LTKDNNPKDDVKKASKKPESTS.

The protein belongs to the activator 1 small subunits family. RfcL subfamily. As to quaternary structure, heteromultimer composed of small subunits (RfcS) and large subunits (RfcL).

Part of the RFC clamp loader complex which loads the PCNA sliding clamp onto DNA. The sequence is that of Replication factor C large subunit from Methanococcus vannielii (strain ATCC 35089 / DSM 1224 / JCM 13029 / OCM 148 / SB).